The primary structure comprises 110 residues: PHD finger-like domain-containing protein 5B (110 aa).

The protein belongs to the PHF5 family.

This chain is PHD finger-like domain-containing protein 5B, found in Arabidopsis thaliana (Mouse-ear cress).